Reading from the N-terminus, the 132-residue chain is Large ribosomal subunit protein uL22c (132 aa).

The protein belongs to the universal ribosomal protein uL22 family. As to quaternary structure, part of the 50S ribosomal subunit.

It localises to the plastid. The protein resides in the chloroplast. Its function is as follows. This protein binds specifically to 23S rRNA. The globular domain of the protein is located near the polypeptide exit tunnel on the outside of the subunit, while an extended beta-hairpin is found that lines the wall of the exit tunnel in the center of the 70S ribosome. The polypeptide is Large ribosomal subunit protein uL22c (rpl22) (Populus trichocarpa (Western balsam poplar)).